The sequence spans 243 residues: Putative glycerophosphodiester phosphodiesterase YhdW (243 aa).

One can recognise a GP-PDE domain in the interval Met1–Gly238. His6 acts as the Proton acceptor in catalysis. Positions 33 and 35 each coordinate Ca(2+). His48 functions as the Proton donor in the catalytic mechanism. Glu107 provides a ligand contact to Ca(2+).

It belongs to the glycerophosphoryl diester phosphodiesterase family. Requires Ca(2+) as cofactor.

It catalyses the reaction a sn-glycero-3-phosphodiester + H2O = an alcohol + sn-glycerol 3-phosphate + H(+). Glycerophosphodiester phosphodiesterase hydrolyzes glycerophosphodiesters into glycerol-3-phosphate (G3P) and the corresponding alcohol. The polypeptide is Putative glycerophosphodiester phosphodiesterase YhdW (yhdW) (Bacillus subtilis (strain 168)).